A 135-amino-acid polypeptide reads, in one-letter code: Mini-ribonuclease 3 (135 aa).

D19 is an active-site residue.

It belongs to the MrnC RNase family. As to quaternary structure, homodimer. The cofactor is Mg(2+).

The protein localises to the cytoplasm. Involved in correct processing of both the 5' and 3' ends of 23S rRNA precursor. Processes 30S rRNA precursor transcript even in absence of ribonuclease 3 (Rnc); Rnc processes 30S rRNA into smaller rRNA precursors. The chain is Mini-ribonuclease 3 from Gloeobacter violaceus (strain ATCC 29082 / PCC 7421).